A 393-amino-acid chain; its full sequence is Alpha-1,2 mannosyltransferase KTR1 (393 aa).

Residues Met-1–Lys-16 lie on the Cytoplasmic side of the membrane. The helical; Signal-anchor for type II membrane protein transmembrane segment at Leu-17–Ala-34 threads the bilayer. The stem region stretch occupies residues Gln-35–Gly-68. Over Gln-35–Gly-393 the chain is Lumenal. A catalytic region spans residues Pro-69–Gly-393. Asn-120 carries an N-linked (GlcNAc...) asparagine glycan. The active-site Nucleophile is Glu-280.

The protein belongs to the glycosyltransferase 15 family. Mn(2+) serves as cofactor. Post-translationally, N-glycosylated.

It is found in the golgi apparatus membrane. It functions in the pathway protein modification; protein glycosylation. Its function is as follows. Mannosyltransferase that transfers a mannose residue from GDP-mannose to a range of acceptors in vitro, forming an alpha-(1-&gt;2)-D-mannosyl-D-mannose linkage. In Saccharomyces cerevisiae (strain ATCC 204508 / S288c) (Baker's yeast), this protein is Alpha-1,2 mannosyltransferase KTR1 (KTR1).